A 313-amino-acid chain; its full sequence is Methionyl-tRNA formyltransferase (313 aa).

110 to 113 (SLLP) contacts (6S)-5,6,7,8-tetrahydrofolate.

This sequence belongs to the Fmt family.

The enzyme catalyses L-methionyl-tRNA(fMet) + (6R)-10-formyltetrahydrofolate = N-formyl-L-methionyl-tRNA(fMet) + (6S)-5,6,7,8-tetrahydrofolate + H(+). Attaches a formyl group to the free amino group of methionyl-tRNA(fMet). The formyl group appears to play a dual role in the initiator identity of N-formylmethionyl-tRNA by promoting its recognition by IF2 and preventing the misappropriation of this tRNA by the elongation apparatus. In Enterococcus faecalis (strain ATCC 700802 / V583), this protein is Methionyl-tRNA formyltransferase.